A 363-amino-acid polypeptide reads, in one-letter code: NAD(P)H-quinone oxidoreductase subunit 1, chloroplastic (363 aa).

The next 8 helical transmembrane spans lie at 30-50, 98-118, 127-147, 165-185, 203-223, 248-268, 300-320, and 336-356; these read LVPIVTLVLGITIGVLVIVWL, FSIGPSIAVISIFLSYSVIPF, LSIGVFFWIAISSIAPVGLLM, AAQSISYEIPLALCVLSISLL, FWGWNLWRQPIGFIVFLISSL, YSGIKFGLFYIASYLNLLVSS, VFGTLIGIFITLAKTYLFLFI, and LLNLGWKFLLPISLGNLLLTT.

The protein belongs to the complex I subunit 1 family. In terms of assembly, NDH is composed of at least 16 different subunits, 5 of which are encoded in the nucleus.

Its subcellular location is the plastid. The protein localises to the chloroplast thylakoid membrane. The catalysed reaction is a plastoquinone + NADH + (n+1) H(+)(in) = a plastoquinol + NAD(+) + n H(+)(out). It catalyses the reaction a plastoquinone + NADPH + (n+1) H(+)(in) = a plastoquinol + NADP(+) + n H(+)(out). Functionally, NDH shuttles electrons from NAD(P)H:plastoquinone, via FMN and iron-sulfur (Fe-S) centers, to quinones in the photosynthetic chain and possibly in a chloroplast respiratory chain. The immediate electron acceptor for the enzyme in this species is believed to be plastoquinone. Couples the redox reaction to proton translocation, and thus conserves the redox energy in a proton gradient. This is NAD(P)H-quinone oxidoreductase subunit 1, chloroplastic from Solanum bulbocastanum (Wild potato).